The chain runs to 163 residues: Putative pre-16S rRNA nuclease (163 aa).

The protein belongs to the YqgF nuclease family.

Its subcellular location is the cytoplasm. In terms of biological role, could be a nuclease involved in processing of the 5'-end of pre-16S rRNA. The chain is Putative pre-16S rRNA nuclease from Nitrobacter winogradskyi (strain ATCC 25391 / DSM 10237 / CIP 104748 / NCIMB 11846 / Nb-255).